The following is a 486-amino-acid chain: Pentatricopeptide repeat-containing protein At2g01860 (486 aa).

A disordered region spans residues Q111–T137. PPR repeat units lie at residues D290–R321, S327–P361, S362–L396, D397–P431, and T432–L466.

It belongs to the PPR family. P subfamily.

This is Pentatricopeptide repeat-containing protein At2g01860 (EMB975) from Arabidopsis thaliana (Mouse-ear cress).